The chain runs to 516 residues: Protein indeterminate-domain 4, chloroplastic (516 aa).

Residues 1 to 26 (MSSSSYNTSVIPSSSSSAQPFFITSS) are compositionally biased toward low complexity. A disordered region spans residues 1–68 (MSSSSYNTSV…QPGNPNPDAE (68 aa)). The transit peptide at 1–70 (MSSSSYNTSV…GNPNPDAEVV (70 aa)) directs the protein to the chloroplast. Ser-73 bears the Phosphoserine mark. 2 consecutive C2H2-type zinc fingers follow at residues 83-105 (FICDVCNKGFQREQNLQLHRRGH) and 124-154 (YLCPEPTCVHHDPSRALGDLTGIKKHYYRKH). Residues 146–153 (IKKHYYRK) carry the Nuclear localization signal motif. A C2H2-type 2; degenerate zinc finger spans residues 159–182 (WKCEKCSKRYAVQSDWKAHSKTCG). Zn(2+) contacts are provided by Cys-161, Cys-164, His-177, Cys-181, Cys-188, Cys-190, His-203, and Cys-207. Residues 186–209 (YRCDCGTIFSRRDSYITHRAFCDA) form a CCHC-type 2; atypical zinc finger. Positions 196–208 (RRDSYITHRAFCD) are SHR-binding. A disordered region spans residues 483-516 (NRGGGGGGRGSARGGVSLDGEAKFPEQNYPFGRG). Residues 484 to 495 (RGGGGGGRGSAR) show a composition bias toward gly residues.

In terms of assembly, binds to RGA and SCL3 competitively in the nucleus.

It is found in the plastid. The protein localises to the chloroplast. The protein resides in the nucleus. Its function is as follows. Transcription factor that may act a transcriptional activator of nuclear-encoded photosynthetic gene expression. Binds DNA via its zinc fingers. Recognizes and binds to SCL3 promoter sequence 5'-AGACAA-3' to promote its expression when in complex with RGA. This chain is Protein indeterminate-domain 4, chloroplastic, found in Arabidopsis thaliana (Mouse-ear cress).